The chain runs to 85 residues: RNA-binding protein Hfq (85 aa).

The Sm domain maps to 9–69; that stretch reads DQLLNTARKD…ISTIIPAKII (61 aa).

The protein belongs to the Hfq family. In terms of assembly, homohexamer.

In terms of biological role, RNA chaperone that binds small regulatory RNA (sRNAs) and mRNAs to facilitate mRNA translational regulation in response to envelope stress, environmental stress and changes in metabolite concentrations. Also binds with high specificity to tRNAs. The chain is RNA-binding protein Hfq from Leptospira interrogans serogroup Icterohaemorrhagiae serovar copenhageni (strain Fiocruz L1-130).